We begin with the raw amino-acid sequence, 262 residues long: pFDCC methylesterase MES16 (262 aa).

Residue Ser87 is the Acyl-ester intermediate of the active site. Catalysis depends on charge relay system residues Asp211 and His239.

This sequence belongs to the AB hydrolase superfamily. Methylesterase family.

The protein resides in the cytoplasm. The enzyme catalyses methyl (indol-3-yl)acetate + H2O = (indol-3-yl)acetate + methanol + H(+). The catalysed reaction is methyl (-)-jasmonate + H2O = jasmonate + methanol + H(+). It catalyses the reaction primary fluorescent dioxobilin-type chlorophyll catabolite + H2O = O13(4)-desmethyl pFDCC + methanol + H(+). Its pathway is plant hormone biosynthesis. It functions in the pathway lipid metabolism; oxylipin biosynthesis. The protein operates within porphyrin-containing compound metabolism; chlorophyll degradation. Functionally, involved in the chlorophyll breakdown by its action in fluorescent chlorophyll catabolites (FCCs) demethylation. Demethylates the C13(2)-carboxymethyl group present at the isocyclic ring of chlorophyll. Uses primary fluorescent dioxobilin-type chlorophyll catabolite (pFDCC) as substrate to produce O13(4)-desmethyl pFDCC. Also able to catalyze pheophorbides in vitro. Methylesterase shown to have carboxylesterase activity, methyl indole-3-acetic acid (MeIAA) esterase activity and methyl jasmonate (MeJA) esterase activity in vitro. The chain is pFDCC methylesterase MES16 from Arabidopsis thaliana (Mouse-ear cress).